A 150-amino-acid polypeptide reads, in one-letter code: Submaxillary gland androgen-regulated protein 2, isoform alpha (150 aa).

Positions 1–22 (MKALYMVFVLWVLIGCFLSGEC) are cleaved as a signal peptide.

Its subcellular location is the secreted. May play a role in protection or detoxification. The sequence is that of Submaxillary gland androgen-regulated protein 2, isoform alpha (Smr2) from Mus musculus (Mouse).